Reading from the N-terminus, the 431-residue chain is Glutamate-1-semialdehyde 2,1-aminomutase (431 aa).

Lys-269 is modified (N6-(pyridoxal phosphate)lysine).

This sequence belongs to the class-III pyridoxal-phosphate-dependent aminotransferase family. HemL subfamily. In terms of assembly, homodimer. The cofactor is pyridoxal 5'-phosphate.

It localises to the cytoplasm. It catalyses the reaction (S)-4-amino-5-oxopentanoate = 5-aminolevulinate. Its pathway is porphyrin-containing compound metabolism; protoporphyrin-IX biosynthesis; 5-aminolevulinate from L-glutamyl-tRNA(Glu): step 2/2. It participates in porphyrin-containing compound metabolism; chlorophyll biosynthesis. This chain is Glutamate-1-semialdehyde 2,1-aminomutase, found in Chlorobaculum tepidum (strain ATCC 49652 / DSM 12025 / NBRC 103806 / TLS) (Chlorobium tepidum).